A 603-amino-acid chain; its full sequence is Myotubularin (603 aa).

The span at 1 to 13 (MASASTSKYNSHS) shows a compositional bias: polar residues. The disordered stretch occupies residues 1–25 (MASASTSKYNSHSLENESIKRTSRD). A phosphoserine mark is found at Ser-13 and Ser-18. A compositionally biased stretch (basic and acidic residues) spans 14–25 (LENESIKRTSRD). One can recognise a GRAM domain in the interval 29–97 (RDLTEAVPRL…GVISRIEKMG (69 aa)). A Myotubularin phosphatase domain is found at 163–538 (GWTVYNPVEE…RHLELWVNYY (376 aa)). Residues Asn-288, Asn-313, and Ile-314 each contribute to the a 1,2-diacyl-sn-glycero-3-phospho-(1D-myo-inositol-3,5-bisphosphate) site. Positions 288, 313, and 314 each coordinate a 1,2-diacyl-sn-glycero-3-phospho-(1D-myo-inositol-3-phosphate). Catalysis depends on Cys-375, which acts as the Phosphocysteine intermediate. A 1,2-diacyl-sn-glycero-3-phospho-(1D-myo-inositol-3,5-bisphosphate) is bound by residues Ser-376, Asp-377, Gly-378, Trp-379, Asp-380, Arg-381, Lys-417, and Arg-421. Residues Ser-376, Asp-377, Gly-378, Trp-379, Asp-380, and Arg-381 each coordinate a 1,2-diacyl-sn-glycero-3-phospho-(1D-myo-inositol-3-phosphate). Arg-421 contributes to the a 1,2-diacyl-sn-glycero-3-phospho-(1D-myo-inositol-3-phosphate) binding site. A Phosphothreonine modification is found at Thr-495. The segment at 579–603 (SAKLSDPPTSPSSPSQMMPHVQTHF) is disordered. Residue Ser-588 is modified to Phosphoserine.

It belongs to the protein-tyrosine phosphatase family. Non-receptor class myotubularin subfamily. In terms of assembly, heterodimer with MTMR12. Interacts with KMT2A/MLL1 (via SET domain). Interacts with DES in skeletal muscle but not in cardiac muscle. Interacts with SPEG.

The protein resides in the cytoplasm. The protein localises to the cell membrane. Its subcellular location is the cell projection. It localises to the filopodium. It is found in the ruffle. The protein resides in the late endosome. The protein localises to the myofibril. Its subcellular location is the sarcomere. The catalysed reaction is a 1,2-diacyl-sn-glycero-3-phospho-(1D-myo-inositol-3-phosphate) + H2O = a 1,2-diacyl-sn-glycero-3-phospho-(1D-myo-inositol) + phosphate. It carries out the reaction a 1,2-diacyl-sn-glycero-3-phospho-(1D-myo-inositol-3,5-bisphosphate) + H2O = a 1,2-diacyl-sn-glycero-3-phospho-(1D-myo-inositol-5-phosphate) + phosphate. The enzyme catalyses 1,2-dioctanoyl-sn-glycero-3-phospho-(1-D-myo-inositol-3-phosphate) + H2O = 1,2-dioctanoyl-sn-glycero-3-phospho-(1D-myo-inositol) + phosphate. It catalyses the reaction 1,2-dioctanoyl-sn-glycero-3-phospho-(1D-myo-inositol-3,5-bisphosphate) + H2O = 1,2-dioctanoyl-sn-glycero-3-phospho-(1D-myo-inositol-5-phosphate) + phosphate. The catalysed reaction is 1,2-dihexadecanoyl-sn-glycero-3-phospho-(1D-myo-inositol-3,5-phosphate) + H2O = 1,2-dihexadecanoyl-sn-glycero-3-phospho-(1D-myo-inositol-5-phosphate) + phosphate. With respect to regulation, allosterically activated by phosphatidylinositol 5-phosphate (PI5P). Functionally, lipid phosphatase which dephosphorylates phosphatidylinositol 3-monophosphate (PI3P) and phosphatidylinositol 3,5-bisphosphate (PI(3,5)P2). Has also been shown to dephosphorylate phosphotyrosine- and phosphoserine-containing peptides. Negatively regulates EGFR degradation through regulation of EGFR trafficking from the late endosome to the lysosome. Plays a role in vacuolar formation and morphology. Regulates desmin intermediate filament assembly and architecture. Plays a role in mitochondrial morphology and positioning. Required for skeletal muscle maintenance but not for myogenesis. In skeletal muscles, stabilizes MTMR12 protein levels. The chain is Myotubularin from Pongo abelii (Sumatran orangutan).